A 614-amino-acid chain; its full sequence is MGSISPLPLTPDASCCPREVILEKYQQERKKRQLNCVPDNEATELHHKYAPVQGVDQPSYTRSPIITDSKVVIIGGGLAGLVTAVKLKTQGINDFVILEKGAECGGTWHWNQYPGAACDIESLIYLPLLEETGYVPQSRYSSGAEIRAHVARIILKWNLGEHICPLTQVTSTKWDESKLRWEVQTDHSDSLTCQFLVLATGLFHEPNLPRIPGSERFKGDQFHSGRWDYAVTGGDPAGSVPMDKLATKTVGVIGTGASGVQIVPRLAQDAKKLYVFQRTPSSITARDNYTMTPLMTEPVIQKPGWQRARMVQFCEMLEAEEHEMSDKDGTVAEGFDALSLRKVLNGMRKDDVAPAQMGELYARADISLMESIRKHVSNTVDDHETAEKLKPWYPFLCKRPVFQNDYLSSFNRSTVELVDTNGQGVSCLTEKGVVANGKEHEVDLLIYATGFDYEIGTPFYQRTRIHVFGSHGQTLDDAWADQGPSTLFGIHIRDFPNLLYIGPCQAGVTFNFTHTIYEAADHISHVIGDCLKDGASFQAIQPSIEAQSDWVKQTEEGSEMRLQYAQSCPPGYFNGHGRPEKIPARWGYYPKGIKAWANAMRECRAEGMKGLERW.

Residues Glu99, 107–110, Asp119, and Tyr125 each bind FAD; that span reads TWHW. Residues 255–261, 278–279, and 398–399 contribute to the NADP(+) site; these read TGASGVQ, RT, and KR.

It belongs to the FAD-binding monooxygenase family. FAD is required as a cofactor.

The catalysed reaction is gamma-lactone-2-keto[5.5.5.5]fenestrane + NADPH + O2 + H(+) = penifulvin A + NADP(+) + H2O. It participates in secondary metabolite biosynthesis; terpenoid biosynthesis. In terms of biological role, baeyer-Villiger monooxygenase; part of the gene cluster that mediates the biosynthesis of penifulvin A, a potent insecticidal sesquiterpene that features a [5.5.5.6]dioxafenestrane ring. Within the pathway, peniC is responsible for the final regioselective Baeyer-Villiger oxidation of gamma-lactone-2-keto[5.5.5.5]fenestran between C1 and C2 to form the delta-lactone moiety of penifulvin A. The first step of the pathway is performed by the sesquiterpene cyclase peniA that generates the angular triquinane scaffold silphinene via cyclization of the linear farnesyl pyrophosphate (FPP). The cytochrome P450 monooxygenase peniB and the flavin-dependent monooxygenase peniC then catalyze a series of oxidation reactions to transform silphinene into penifulvin A. The polypeptide is Baeyer-Villiger monooxygenase peniC (Penicillium patulum (Penicillium griseofulvum)).